The following is a 226-amino-acid chain: Probable thiol methyltransferase 2 (226 aa).

Tryptophan 29, tryptophan 33, tryptophan 40, and glycine 67 together coordinate S-adenosyl-L-methionine. Serine 79 is subject to Phosphoserine. Residues aspartate 88, 116 to 117 (DF), and tyrosine 132 each bind S-adenosyl-L-methionine.

This sequence belongs to the class I-like SAM-binding methyltransferase superfamily. TPMT family.

The catalysed reaction is a thiol + S-adenosyl-L-methionine = a methyl thioether + S-adenosyl-L-homocysteine + H(+). Functionally, S-adenosyl-L-methionine-dependent methyltransferase. The protein is Probable thiol methyltransferase 2 (HOL3) of Arabidopsis thaliana (Mouse-ear cress).